Here is a 272-residue protein sequence, read N- to C-terminus: Type II secretion system protein C (272 aa).

The Cytoplasmic portion of the chain corresponds to 1 to 16; sequence MNISKLPPLSPSVIRR. The helical transmembrane segment at 17–35 threads the bilayer; sequence ILFYLLMLLFCQQLAMIFW. The Periplasmic portion of the chain corresponds to 36–272; it reads RIGLPDNAPV…DIYMEFGGDE (237 aa).

Belongs to the GSP C family.

The protein localises to the cell inner membrane. Functionally, involved in a type II secretion system (T2SS, formerly general secretion pathway, GSP) for the export of proteins. Required for the translocation of the multiple pectic enzymes. The sequence is that of Type II secretion system protein C (outC) from Dickeya dadantii (strain 3937) (Erwinia chrysanthemi (strain 3937)).